The primary structure comprises 290 residues: 4-hydroxy-tetrahydrodipicolinate synthase (290 aa).

A pyruvate-binding site is contributed by Ser-44. Tyr-132 serves as the catalytic Proton donor/acceptor. Lys-161 functions as the Schiff-base intermediate with substrate in the catalytic mechanism. Residue Val-202 coordinates pyruvate.

Belongs to the DapA family. As to quaternary structure, homotetramer; dimer of dimers.

It localises to the cytoplasm. The catalysed reaction is L-aspartate 4-semialdehyde + pyruvate = (2S,4S)-4-hydroxy-2,3,4,5-tetrahydrodipicolinate + H2O + H(+). It functions in the pathway amino-acid biosynthesis; L-lysine biosynthesis via DAP pathway; (S)-tetrahydrodipicolinate from L-aspartate: step 3/4. Catalyzes the condensation of (S)-aspartate-beta-semialdehyde [(S)-ASA] and pyruvate to 4-hydroxy-tetrahydrodipicolinate (HTPA). The polypeptide is 4-hydroxy-tetrahydrodipicolinate synthase (Hydrogenobaculum sp. (strain Y04AAS1)).